A 383-amino-acid chain; its full sequence is Presenilin-associated rhomboid-like protein A, mitochondrial (383 aa).

The transit peptide at 1-37 directs the protein to the mitochondrion; it reads MAWRSCFMKWTQINSINASSLCPKSTRLNIHPQQRCG. The segment at 35-75 is disordered; sequence RCGFRKTERPSESKKGVQETEAEAGGHNRAVPPKPVPPLPP. The Mitochondrial matrix segment spans residues 38–83; sequence FRKTERPSESKKGVQETEAEAGGHNRAVPPKPVPPLPPRRPHQLFR. The segment covering 39–52 has biased composition (basic and acidic residues); it reads RKTERPSESKKGVQ. Residues 66–75 are compositionally biased toward pro residues; sequence PPKPVPPLPP. The helical transmembrane segment at 84–104 threads the bilayer; it reads PLVFTVGFTGCSFGAAAILQY. At 105–168 the chain is on the mitochondrial intermembrane side; sequence ESVKSRVQLA…FWSGLSEGQK (64 aa). Residues 169 to 189 traverse the membrane as a helical segment; that stretch reads TVTGIIALNTVVLCCWRVPAM. At 190-219 the chain is on the mitochondrial matrix side; the sequence is QRFLVKYFTSNPASKTRCLPMVLSSFSHYS. The chain crosses the membrane as a helical span at residues 220-240; sequence VIHMVVNMYVLWTFSSSIVSL. The Mitochondrial intermembrane portion of the chain corresponds to 241–245; that stretch reads LGREQ. Residues 246-266 traverse the membrane as a helical segment; it reads FLALYLSGGVISTFVSYVFKT. At 267–271 the chain is on the mitochondrial matrix side; that stretch reads ATGRL. A helical membrane pass occupies residues 272–292; sequence GPSLGASGSIMTVLAAVCTKI. The active-site Nucleophile is serine 278. At 293–298 the chain is on the mitochondrial intermembrane side; the sequence is PEAKLG. Residues 299–319 form a helical membrane-spanning segment; sequence IVLLPVISFSAGNALKALVAL. At 320 to 334 the chain is on the mitochondrial matrix side; the sequence is DIAGLVLGWRFFDHA. A helical transmembrane segment spans residues 335 to 355; it reads AHLGGALFGVWYIGYGHELIW. Histidine 336 is an active-site residue. At 356–383 the chain is on the mitochondrial intermembrane side; it reads RKREPLIKFWHELRNMSPGRPGPGGGGG.

The protein belongs to the peptidase S54 family.

It is found in the mitochondrion inner membrane. It carries out the reaction Cleaves type-1 transmembrane domains using a catalytic dyad composed of serine and histidine that are contributed by different transmembrane domains.. Required for the control of apoptosis during postnatal growth. Essential for proteolytic processing of an antiapoptotic form of opa1 which prevents the release of mitochondrial cytochrome c in response to intrinsic apoptotic signals. This Danio rerio (Zebrafish) protein is Presenilin-associated rhomboid-like protein A, mitochondrial (parla).